Here is a 229-residue protein sequence, read N- to C-terminus: Probable endo-1,4-beta-xylanase A (229 aa).

Residues 1-18 (MVSFKYLFLAASALGALA) form the signal peptide. Asparagine 30 and asparagine 100 each carry an N-linked (GlcNAc...) asparagine glycan. Positions 41–229 (AGTPSSTGWN…SSGSSSITVY (189 aa)) constitute a GH11 domain. Residue glutamate 125 is the Nucleophile of the active site. Glutamate 216 functions as the Proton donor in the catalytic mechanism.

The protein belongs to the glycosyl hydrolase 11 (cellulase G) family.

Its subcellular location is the secreted. It catalyses the reaction Endohydrolysis of (1-&gt;4)-beta-D-xylosidic linkages in xylans.. The protein operates within glycan degradation; xylan degradation. Its function is as follows. Endo-1,4-beta-xylanase involved in the hydrolysis of xylan, a major structural heterogeneous polysaccharide found in plant biomass representing the second most abundant polysaccharide in the biosphere, after cellulose. The polypeptide is Probable endo-1,4-beta-xylanase A (xlnA) (Aspergillus clavatus (strain ATCC 1007 / CBS 513.65 / DSM 816 / NCTC 3887 / NRRL 1 / QM 1276 / 107)).